We begin with the raw amino-acid sequence, 665 residues long: MLLESNTKNEEIKDNLKYLVLLSKQYPTINEAATEIINLQAILNLPKGTEHFLSDVHGEYEQFIHVLKNASGVIKRKIDDIFGNRLMQSEKKSLATLIYYPEQKLDIILKQEKNIDDWYKITLYRLIEVCRNVSSKYTRSKVRKALPKEFSYIIEELLHEQPKGVDKQEYYDEIIKTIISIDRAKEFITAISKLIQRLVVDRLHIIGDIFDRGPRADIIMDKLEEYHAVDIQWGNHDILWMGAASGSSVCMANVIRISARYANLSTIEDGYGINLLPLATFAMDFYGNDKCKNFEPKIESDKSYTVKEIELIGKMHKAIAIIQFKLEGEAIKRHPEFKMEHRMLLNKINFEDSTIELDGKKYKLNDTSFPTIDKNDPYKLIDEEREVVEKLRSSFVNSEKLNRHVRFLFSHGNLYLKFNSNLLYHGCIPLNEDGTFKEVLIGSHKYKGKALLDKLDVLARKSFFYEENSKNSKYENDMIWYLWSGPFSPLFGKEKMTTFERYFIDDKKTHYEKKDPYYHYRDDEDICINILREFGLDSEQAHIINGHVPVESKNGENPIKANGKLIVIDGGFSKAYQSKTGIAGYTLIYNSFGLQLVSHELFETTEKAIKEETDIISSTVIFEKSVRRKRVGDTDIGKDLKKQLYELNLLLLAYKKGLIKEFVKS.

It belongs to the FBPase class 3 family. Mn(2+) serves as cofactor.

It carries out the reaction beta-D-fructose 1,6-bisphosphate + H2O = beta-D-fructose 6-phosphate + phosphate. The protein operates within carbohydrate biosynthesis; gluconeogenesis. The sequence is that of Fructose-1,6-bisphosphatase class 3 from Clostridium acetobutylicum (strain ATCC 824 / DSM 792 / JCM 1419 / IAM 19013 / LMG 5710 / NBRC 13948 / NRRL B-527 / VKM B-1787 / 2291 / W).